Reading from the N-terminus, the 241-residue chain is Carboxy-S-adenosyl-L-methionine synthase (241 aa).

Residues Tyr-38, 63–65, 88–89, 116–117, Asn-131, and Arg-198 each bind S-adenosyl-L-methionine; these read GCS, DN, and DI.

It belongs to the class I-like SAM-binding methyltransferase superfamily. Cx-SAM synthase family. Homodimer.

It carries out the reaction prephenate + S-adenosyl-L-methionine = carboxy-S-adenosyl-L-methionine + 3-phenylpyruvate + H2O. In terms of biological role, catalyzes the conversion of S-adenosyl-L-methionine (SAM) to carboxy-S-adenosyl-L-methionine (Cx-SAM). In Actinobacillus pleuropneumoniae serotype 3 (strain JL03), this protein is Carboxy-S-adenosyl-L-methionine synthase.